We begin with the raw amino-acid sequence, 183 residues long: Large ribosomal subunit protein uL5 (183 aa).

It belongs to the universal ribosomal protein uL5 family. Part of the 50S ribosomal subunit; part of the 5S rRNA/L5/L18/L25 subcomplex. Contacts the 5S rRNA and the P site tRNA. Forms a bridge to the 30S subunit in the 70S ribosome.

Functionally, this is one of the proteins that bind and probably mediate the attachment of the 5S RNA into the large ribosomal subunit, where it forms part of the central protuberance. In the 70S ribosome it contacts protein S13 of the 30S subunit (bridge B1b), connecting the 2 subunits; this bridge is implicated in subunit movement. Contacts the P site tRNA; the 5S rRNA and some of its associated proteins might help stabilize positioning of ribosome-bound tRNAs. The protein is Large ribosomal subunit protein uL5 of Fusobacterium nucleatum subsp. nucleatum (strain ATCC 25586 / DSM 15643 / BCRC 10681 / CIP 101130 / JCM 8532 / KCTC 2640 / LMG 13131 / VPI 4355).